A 299-amino-acid chain; its full sequence is ATP phosphoribosyltransferase (299 aa).

This sequence belongs to the ATP phosphoribosyltransferase family. Long subfamily. Equilibrium between an active dimeric form, an inactive hexameric form and higher aggregates. Interconversion between the various forms is largely reversible and is influenced by the natural substrates and inhibitors of the enzyme. Mg(2+) is required as a cofactor.

It is found in the cytoplasm. The catalysed reaction is 1-(5-phospho-beta-D-ribosyl)-ATP + diphosphate = 5-phospho-alpha-D-ribose 1-diphosphate + ATP. Its pathway is amino-acid biosynthesis; L-histidine biosynthesis; L-histidine from 5-phospho-alpha-D-ribose 1-diphosphate: step 1/9. With respect to regulation, feedback inhibited by histidine. Functionally, catalyzes the condensation of ATP and 5-phosphoribose 1-diphosphate to form N'-(5'-phosphoribosyl)-ATP (PR-ATP). Has a crucial role in the pathway because the rate of histidine biosynthesis seems to be controlled primarily by regulation of HisG enzymatic activity. This is ATP phosphoribosyltransferase from Shigella dysenteriae serotype 1 (strain Sd197).